Here is a 295-residue protein sequence, read N- to C-terminus: Sulfotransferase 1A1 (295 aa).

48–53 (KSGTTW) serves as a coordination point for 3'-phosphoadenylyl sulfate. Position 106–108 (106–108 (KTH)) interacts with substrate. The active-site Proton acceptor is the H108. Residues R130, S138, Y193, 227 to 232 (TSFKEM), and 255 to 259 (FMRKG) contribute to the 3'-phosphoadenylyl sulfate site. S138 is modified (phosphoserine).

The protein belongs to the sulfotransferase 1 family. In terms of assembly, homodimer.

Its subcellular location is the cytoplasm. The catalysed reaction is a phenol + 3'-phosphoadenylyl sulfate = an aryl sulfate + adenosine 3',5'-bisphosphate + H(+). The enzyme catalyses 17beta-estradiol + 3'-phosphoadenylyl sulfate = 17beta-estradiol 3-sulfate + adenosine 3',5'-bisphosphate + H(+). It catalyses the reaction 4-ethylphenol + 3'-phosphoadenylyl sulfate = 4-ethylphenyl sulfate + adenosine 3',5'-bisphosphate + H(+). It carries out the reaction 4-nitrophenol + 3'-phosphoadenylyl sulfate = 4-nitrophenyl sulfate + adenosine 3',5'-bisphosphate. The catalysed reaction is dopamine + 3'-phosphoadenylyl sulfate = dopamine 3-O-sulfate + adenosine 3',5'-bisphosphate + H(+). The enzyme catalyses dopamine + 3'-phosphoadenylyl sulfate = dopamine 4-O-sulfate + adenosine 3',5'-bisphosphate + H(+). It catalyses the reaction 3,3',5-triiodo-L-thyronine + 3'-phosphoadenylyl sulfate = 3,3',5-triiodo-L-thyronine sulfate + adenosine 3',5'-bisphosphate + H(+). It carries out the reaction 3,3',5'-triiodo-L-thyronine + 3'-phosphoadenylyl sulfate = 3,3',5'-triiodo-L-thyronine sulfate + adenosine 3',5'-bisphosphate + H(+). The catalysed reaction is 3,3'-diiodo-L-thyronine + 3'-phosphoadenylyl sulfate = 3,3'-diiodo-L-thyronine sulfate + adenosine 3',5'-bisphosphate + H(+). The enzyme catalyses L-thyroxine + 3'-phosphoadenylyl sulfate = L-thyroxine sulfate + adenosine 3',5'-bisphosphate + H(+). Functionally, sulfotransferase that utilizes 3'-phospho-5'-adenylyl sulfate (PAPS) as sulfonate donor to catalyze the sulfate conjugation of a wide variety of acceptor molecules bearing a hydroxyl or an amine group. Sulfonation increases the water solubility of most compounds, and therefore their renal excretion, but it can also result in bioactivation to form active metabolites. Displays broad substrate specificity for small phenolic compounds. Plays an important role in the sulfonation of endogenous molecules such as steroid hormones. Mediates also the metabolic activation of carcinogenic N-hydroxyarylamines leading to highly reactive intermediates capable of forming DNA adducts, potentially resulting in mutagenesis. May play a role in gut microbiota-host metabolic interaction. O-sulfonates 4-ethylphenol (4-EP), a dietary tyrosine-derived metabolite produced by gut bacteria. The product 4-EPS crosses the blood-brain barrier and may negatively regulate oligodendrocyte maturation and myelination, affecting the functional connectivity of different brain regions associated with the limbic system. Catalyzes the sulfate conjugation of dopamine. Catalyzes the sulfation of T4 (L-thyroxine/3,5,3',5'-tetraiodothyronine), T3 (3,5,3'-triiodothyronine), rT3 (3,3',5'-triiodothyronine) and 3,3'-T2 (3,3'-diiodothyronine), with a substrate preference of 3,3'-T2 &gt; rT3 &gt; T3 &gt; T4. The polypeptide is Sulfotransferase 1A1 (SULT1A1) (Macaca fascicularis (Crab-eating macaque)).